A 1342-amino-acid polypeptide reads, in one-letter code: DNA-directed RNA polymerase subunit beta (1342 aa).

The protein belongs to the RNA polymerase beta chain family. In terms of assembly, the RNAP catalytic core consists of 2 alpha, 1 beta, 1 beta' and 1 omega subunit. When a sigma factor is associated with the core the holoenzyme is formed, which can initiate transcription.

The enzyme catalyses RNA(n) + a ribonucleoside 5'-triphosphate = RNA(n+1) + diphosphate. Its function is as follows. DNA-dependent RNA polymerase catalyzes the transcription of DNA into RNA using the four ribonucleoside triphosphates as substrates. In Histophilus somni (strain 129Pt) (Haemophilus somnus), this protein is DNA-directed RNA polymerase subunit beta.